Reading from the N-terminus, the 124-residue chain is Quinol oxidase subunit 4 (124 aa).

3 consecutive transmembrane segments (helical) span residues 16–36, 44–64, and 78–98; these read IVGF…AVYT, LWII…MFMH, and TLFG…IFAA.

The protein belongs to the cytochrome c oxidase bacterial subunit 4 family.

Its subcellular location is the cell membrane. It catalyses the reaction 2 a quinol + O2 = 2 a quinone + 2 H2O. In terms of biological role, catalyzes quinol oxidation with the concomitant reduction of oxygen to water. Major component for energy conversion during vegetative growth. In Bacillus spizizenii (strain ATCC 23059 / NRRL B-14472 / W23) (Bacillus subtilis subsp. spizizenii), this protein is Quinol oxidase subunit 4 (qoxD).